A 576-amino-acid chain; its full sequence is S-layer protein (576 aa).

The first 23 residues, Lys1–Ala23, serve as a signal peptide directing secretion. N-linked (GlcNAc...) asparagine glycosylation is found at Asn102 and Asn132.

This sequence belongs to the Mj S-layer protein family. N-linked glycans consist of the 779 Da trisaccharide beta-ManNAc(Thr)-(1-4)-beta-GlcNAc3NAcA-(1-3)-beta-GlcNAc.

Its subcellular location is the secreted. The protein resides in the cell wall. The protein localises to the S-layer. Its function is as follows. S-layer protein. The S-layer is a paracrystalline mono-layered assembly of proteins which coat the surface of the cell. The chain is S-layer protein (sla) from Methanococcus voltae.